We begin with the raw amino-acid sequence, 204 residues long: Guanine-specific ADP-ribosyl transferase (204 aa).

The first 42 residues, 1–42 (MITTSLRRRTAAAVLSLSAVLATTAATAPGAAPAPSAAPAKA), serve as a signal peptide directing secretion. C46 and C76 are oxidised to a cystine. NADH is bound by residues 81-85 (RSDSR) and K98. GDP contacts are provided by residues 111–114 (VLVN), 132–134 (WYK), W159, and Q162. The PN (phosphate-nicotinamide) loop motif lies at 132–136 (WYKSG). C180 and C194 are disulfide-bonded.

This sequence belongs to the pierisin ADP-ribosyltransferase family. As to quaternary structure, monomer.

It localises to the secreted. The enzyme catalyses guanosine + NAD(+) = N(2)-(ADP-D-ribosyl)-guanosine + nicotinamide + H(+). The catalysed reaction is a 2'-deoxyguanosine in DNA + NAD(+) = an N(2)-(ADP-L-ribosyl)-2'-deoxyguanosine in DNA + nicotinamide + H(+). It carries out the reaction 2'-deoxyguanosine + NAD(+) = N(2)-(ADP-D-ribosyl)-2'-deoxyguanosine + nicotinamide + H(+). It catalyses the reaction GMP + NAD(+) = N(2)-(ADP-D-ribosyl)-GMP + nicotinamide + H(+). The enzyme catalyses GTP + NAD(+) = N(2)-(ADP-D-ribosyl)-GTP + nicotinamide + H(+). The catalysed reaction is dGMP + NAD(+) = N(2)-(ADP-D-ribosyl)-dGMP + nicotinamide + H(+). It carries out the reaction dGTP + NAD(+) = N(2)-(ADP-D-ribosyl)-dGTP + nicotinamide + H(+). It catalyses the reaction 3',5'-cyclic GMP + NAD(+) = N(2)-(ADP-D-ribosyl)-3',5'-cyclic GMP + nicotinamide + H(+). The enzyme catalyses guanine + NAD(+) = N(2)-(ADP-D-ribosyl)-guanine + nicotinamide + H(+). The catalysed reaction is GDP + NAD(+) = N(2)-(ADP-D-ribosyl)-GDP + nicotinamide + H(+). Inhibited by NADH. Its function is as follows. ADP-ribosylates the N2 amino group of guanosine, deoxyguanosine, GMP, dGMP, cGMP, GTP and dGTP; oligo-guanosine, oligo-deoxyguanosine and tRNA are ADP-ribosylated less efficiently, while dsDNA is a very poor substrate. Also acts on GDP. This is Guanine-specific ADP-ribosyl transferase from Streptomyces coelicolor (strain ATCC BAA-471 / A3(2) / M145).